The chain runs to 478 residues: Amino acid oxidase imqH (478 aa).

Residues 1–22 form the signal peptide; the sequence is MPAPKSIIIVGSGVFGLSTAHA. FAD contacts are provided by Val-14, Phe-15, Asp-38, Asn-53, Ala-57, Asn-58, Arg-63, and Ile-64. N-linked (GlcNAc...) asparagine glycans are attached at residues Asn-97 and Asn-167. Position 208 (Val-208) interacts with FAD. At Cys-399 the chain carries S-8alpha-FAD cysteine. 2 residues coordinate FAD: Phe-432 and Lys-433.

The protein belongs to the MSOX/MTOX family. Dimer. FAD is required as a cofactor.

It functions in the pathway secondary metabolite biosynthesis. Its function is as follows. Nonribosomal peptide synthetase; part of the gene cluster that mediates the biosynthesis of imizoquins A to D, tripeptide-derived alkaloids that serve a protective role against oxidative stress that are essential for normal germination. ImqB is a canonical three-module NRPS that assembles the tripeptide backbone of the imizoquins via condensation of Trp, Tyr, and Leu-derived precursors. N-methylation by imqF and phenol oxidation by imqC, followed by cyclization via the FAD-dependent oxidase imqH carry out the three-step transformation of L-tyrosine into tetrahydroisoquinoline. Importantly, this sequence requires the presence of a free amine in the tyrosine moiety, indicating that isoquinoline formation occurs prior to peptide bond formation. The imidazolidin-4-one ring of imizoquins could form following additional oxidation of the methyl-derived bridgehead carbon by imqH. Lastly, O-methylation by imqG and leucine hydroxylation by imqE complete biosynthesis of the imizoquins. This is Amino acid oxidase imqH from Aspergillus flavus (strain ATCC 200026 / FGSC A1120 / IAM 13836 / NRRL 3357 / JCM 12722 / SRRC 167).